We begin with the raw amino-acid sequence, 341 residues long: Tryptophan--tRNA ligase (341 aa).

Residues 11-13 (RPT) and 19-20 (GH) each bind ATP. Residues 12–20 (PTGKLHIGH) carry the 'HIGH' region motif. Asp-140 is an L-tryptophan binding site. Residues 152-154 (GTD), Leu-194, and 202-206 (KMSKS) contribute to the ATP site. The 'KMSKS' region motif lies at 202-206 (KMSKS).

The protein belongs to the class-I aminoacyl-tRNA synthetase family. As to quaternary structure, homodimer.

Its subcellular location is the cytoplasm. It catalyses the reaction tRNA(Trp) + L-tryptophan + ATP = L-tryptophyl-tRNA(Trp) + AMP + diphosphate + H(+). Catalyzes the attachment of tryptophan to tRNA(Trp). The sequence is that of Tryptophan--tRNA ligase from Streptococcus pneumoniae serotype 4 (strain ATCC BAA-334 / TIGR4).